Consider the following 649-residue polypeptide: Serine/threonine kinase-like domain-containing protein STKLD1 (649 aa).

Residues 1 to 13 (MLGPESDGRRPTQ) are compositionally biased toward basic and acidic residues. Residues 1–23 (MLGPESDGRRPTQGERGPGYPGE) form a disordered region. In terms of domain architecture, Protein kinase spans 28 to 379 (YQVLYQLNPG…CNQAITSAVL (352 aa)). Residues 34–42 (LNPGALGVN) and lysine 57 each bind ATP. Residues 621-640 (FSKPGLPPGGSPQPGCTASG) are disordered.

Belongs to the protein kinase superfamily. Ser/Thr protein kinase family. STKL subfamily.

This chain is Serine/threonine kinase-like domain-containing protein STKLD1 (STKLD1), found in Macaca fascicularis (Crab-eating macaque).